Consider the following 484-residue polypeptide: MEEWVEKYRPKSLNDVAGHNKTKQALINWIESFVNGQKQKPILLAGPPGSGKTTLAHAIAKDYAFDVIELNASDKRNKDVIAQVVGTAATSKSLTGKRTLIVLDEVDGLSGNDDRGGVAEIIKVLKTAENPVILTANDVYKPALMTLRNNVNLINVGSVHTNSIPPVLRKIALKEGFEIDEKVIKTIASHSGGDLRAAINDLQSLATGGSLEVEDAKELPDRDSEKSIFDAMRIIMKTTHYDIATSATRDVKEDLGTIQEWISENLPKEYLRYKDLAGGYDYLSKSDVFLGRVFKRQYFGLWRYASALMTAGTALAKEEKYRGFTRYGPPTIFTKLSRTKGSRQKMKDILKKIALKTHTSTKRARNTLDYLVVIFESNPEVSAELVEYYELTKLEMEFLTNKTIAKNIFSVIAGKKPKVKTETPKKKEKTKEAMPIIPKRPRISEPPEPLKEVITTIEKSVEKADTKEKEKKDPKKQATLDSFF.

Residue glycine 46 to threonine 53 coordinates ATP. 3 stretches are compositionally biased toward basic and acidic residues: residues valine 419–glutamate 432, arginine 442–lysine 451, and lysine 459–alanine 478. Residues valine 419–phenylalanine 484 are disordered.

Belongs to the activator 1 small subunits family. RfcL subfamily. Heteromultimer composed of small subunits (RfcS) and large subunits (RfcL).

In terms of biological role, part of the RFC clamp loader complex which loads the PCNA sliding clamp onto DNA. The protein is Replication factor C large subunit of Methanococcus maripaludis (strain C5 / ATCC BAA-1333).